Reading from the N-terminus, the 32-residue chain is Ranatuerin-2CSa (32 aa).

A disulfide bridge links C27 with C32.

Expressed by the skin glands.

Its subcellular location is the secreted. The protein resides in the target cell membrane. Functionally, antibacterial peptide with amphipathic alpha-helical structure. Active against E.coli ATCC 25726 (MIC=4-5 uM) and S.aureus ATCC 25923 (MIC=8-10 uM). Has a weak hemolytic activity on human erythrocytes (LC(50)=150-160 uM). The protein is Ranatuerin-2CSa of Rana cascadae (Cascades frog).